The chain runs to 481 residues: GTPase Obg (481 aa).

Residues 2 to 159 (TTFVDRVVLH…IDVVLELKSV (158 aa)) form the Obg domain. Positions 160–330 (ADVGLVGYPS…LMYAMGELVT (171 aa)) constitute an OBG-type G domain. Residues 166–173 (GYPSAGKS), 191–195 (FTTLV), 212–215 (DVPG), 282–285 (NKVD), and 311–313 (SAA) each bind GTP. Residues S173 and T193 each coordinate Mg(2+). Positions 348–426 (PKAVDDAGFT…IGEREFDWQP (79 aa)) constitute an OCT domain. Positions 439–452 (GDQRLAEKSERPSA) are enriched in basic and acidic residues. The tract at residues 439–481 (GDQRLAEKSERPSATERLAARKARRQRPEDEAEADEPVGDGEE) is disordered. The span at 468–481 (DEAEADEPVGDGEE) shows a compositional bias: acidic residues.

This sequence belongs to the TRAFAC class OBG-HflX-like GTPase superfamily. OBG GTPase family. In terms of assembly, monomer. It depends on Mg(2+) as a cofactor.

The protein resides in the cytoplasm. In terms of biological role, an essential GTPase which binds GTP, GDP and possibly (p)ppGpp with moderate affinity, with high nucleotide exchange rates and a fairly low GTP hydrolysis rate. Plays a role in control of the cell cycle, stress response, ribosome biogenesis and in those bacteria that undergo differentiation, in morphogenesis control. In Salinispora tropica (strain ATCC BAA-916 / DSM 44818 / JCM 13857 / NBRC 105044 / CNB-440), this protein is GTPase Obg.